Reading from the N-terminus, the 1198-residue chain is Chromosome partition protein Smc (1198 aa).

ATP is bound at residue 40-47 (PNGSGKSN). Coiled-coil stretches lie at residues 175 to 211 (ITKYRMRKREALKRLDETEHNLERIRDILAEIEGQLG) and 322 to 524 (LGEQ…LAKK). The 114-residue stretch at 534–647 (CGTLADLLQV…VTDMEAATRV (114 aa)) folds into the SMC hinge domain. A coiled-coil region spans residues 687-1042 (SREIQELRQE…AELDKTMSER (356 aa)). The disordered stretch occupies residues 785–818 (AEEQSKLTDSIQEAQEALARQEEKNRQASREMEQ). Residues 803–818 (ARQEEKNRQASREMEQ) are compositionally biased toward basic and acidic residues.

Belongs to the SMC family. In terms of assembly, homodimer.

The protein localises to the cytoplasm. In terms of biological role, required for chromosome condensation and partitioning. The chain is Chromosome partition protein Smc from Desulfitobacterium hafniense (strain Y51).